We begin with the raw amino-acid sequence, 145 residues long: D-aminoacyl-tRNA deacylase (145 aa).

The short motif at 137-138 (GP) is the Gly-cisPro motif, important for rejection of L-amino acids element.

The protein belongs to the DTD family. Homodimer.

Its subcellular location is the cytoplasm. The catalysed reaction is glycyl-tRNA(Ala) + H2O = tRNA(Ala) + glycine + H(+). It catalyses the reaction a D-aminoacyl-tRNA + H2O = a tRNA + a D-alpha-amino acid + H(+). An aminoacyl-tRNA editing enzyme that deacylates mischarged D-aminoacyl-tRNAs. Also deacylates mischarged glycyl-tRNA(Ala), protecting cells against glycine mischarging by AlaRS. Acts via tRNA-based rather than protein-based catalysis; rejects L-amino acids rather than detecting D-amino acids in the active site. By recycling D-aminoacyl-tRNA to D-amino acids and free tRNA molecules, this enzyme counteracts the toxicity associated with the formation of D-aminoacyl-tRNA entities in vivo and helps enforce protein L-homochirality. This chain is D-aminoacyl-tRNA deacylase, found in Salmonella choleraesuis (strain SC-B67).